The following is a 361-amino-acid chain: F-box protein pof7 (361 aa).

Residues 105–157 (NESVVPNILKLPDEVLLVILENCIRDLHDLRYLSSIALTCKHFAKALRADSLY) form the F-box domain.

As to quaternary structure, interacts with skp1.

It localises to the cytoplasm. The polypeptide is F-box protein pof7 (pof7) (Schizosaccharomyces pombe (strain 972 / ATCC 24843) (Fission yeast)).